Consider the following 380-residue polypeptide: MAPNLRKSHPLLKMINNSLIDLPTPSNISAWWNFGSLLGICLATQILTGLLLAMHYTADTTLAFSSVAHTCRNVQYGWLIRNLHANGASFFFICVYLHIGRGLYYGSYLYKETWNTGILLLLTLMATAFVGYVLPWGQMSFWGATVITNLFSAIPYIGQTIVEWAWGGFSVDNPTLTRFFALHFLLPFAIAGLTLIHLTFLHESGSNNPLGIVSNCDKIPFHPYFSLKDALGFMLMFLPLTTLALFSPNLLGDPENFTPANPLVTPPHIKPEWYFLFAYAILRSIPNKLGGVLALAASVLILFLSPLLHKSKQRTMTFRPLSQLLFWTLVANLFILTWVGSQPVEHPFIIIGQLASLTYFTILLILFPITSALENKMLNY.

Transmembrane regions (helical) follow at residues 34-54 (FGSL…LLAM), 78-99 (WLIR…YLHI), 114-134 (WNTG…GYVL), and 179-199 (FFAL…IHLT). 2 residues coordinate heme b: His84 and His98. Heme b is bound by residues His183 and His197. Position 202 (His202) interacts with a ubiquinone. 4 consecutive transmembrane segments (helical) span residues 227–247 (LKDA…ALFS), 289–309 (LGGV…PLLH), 321–341 (LSQL…WVGS), and 348–368 (FIII…ILFP).

It belongs to the cytochrome b family. As to quaternary structure, the cytochrome bc1 complex contains 11 subunits: 3 respiratory subunits (MT-CYB, CYC1 and UQCRFS1), 2 core proteins (UQCRC1 and UQCRC2) and 6 low-molecular weight proteins (UQCRH/QCR6, UQCRB/QCR7, UQCRQ/QCR8, UQCR10/QCR9, UQCR11/QCR10 and a cleavage product of UQCRFS1). This cytochrome bc1 complex then forms a dimer. Heme b is required as a cofactor.

The protein localises to the mitochondrion inner membrane. Functionally, component of the ubiquinol-cytochrome c reductase complex (complex III or cytochrome b-c1 complex) that is part of the mitochondrial respiratory chain. The b-c1 complex mediates electron transfer from ubiquinol to cytochrome c. Contributes to the generation of a proton gradient across the mitochondrial membrane that is then used for ATP synthesis. The chain is Cytochrome b (MT-CYB) from Oceanites oceanicus (Wilson's storm petrel).